Here is a 384-residue protein sequence, read N- to C-terminus: GDSL esterase/lipase At1g28670 (384 aa).

The signal sequence occupies residues 1-24 (MASSLKKLISSFLLVLYSTTIIVA). The active-site Nucleophile is Ser42. N-linked (GlcNAc...) asparagine glycans are attached at residues Asn105, Asn138, and Asn321. Catalysis depends on residues Asp346 and His349.

Belongs to the 'GDSL' lipolytic enzyme family.

The protein localises to the secreted. This Arabidopsis thaliana (Mouse-ear cress) protein is GDSL esterase/lipase At1g28670.